The primary structure comprises 94 residues: DNA-binding protein HU (94 aa).

Belongs to the bacterial histone-like protein family. As to quaternary structure, homodimer.

Its function is as follows. Histone-like DNA-binding protein which is capable of wrapping DNA to stabilize it, and thus to prevent its denaturation under extreme environmental conditions. In Helicobacter pylori (strain J99 / ATCC 700824) (Campylobacter pylori J99), this protein is DNA-binding protein HU (hup).